A 213-amino-acid polypeptide reads, in one-letter code: Motile sperm domain-containing protein 1 (213 aa).

The MSP domain occupies 16–143 (PVFVFPTELI…KEHLTESVFF (128 aa)). 2 consecutive transmembrane segments (helical) span residues 159–179 (SLLTVFLGVVCIAALMLPTLG) and 191–211 (LSVNQKLVAAYILGLITMAIL). Residues 205-208 (LITM) carry the Nuclear export signal motif.

Widely expressed. Shows highest expression in ribs, and slightly lower levels of expression in heart, kidney, muscle, thymus, calvariae and lung. Also detected at low levels in spleen and liver.

The protein localises to the endoplasmic reticulum membrane. Its subcellular location is the golgi apparatus membrane. Plays a role in differentiation and/or proliferation of mesenchymal stem cells. Proposed to be involved in epithelial-to-mesenchymal transition (EMT). However, another study suggests that it is not required for EMT or stem cell self-renewal and acts during later stages of differentiation. This Mus musculus (Mouse) protein is Motile sperm domain-containing protein 1 (Mospd1).